The chain runs to 407 residues: 5-aminolevulinate synthase 1 (407 aa).

Arginine 21, serine 137, and lysine 156 together coordinate substrate. Residues serine 189, histidine 217, and threonine 245 each contribute to the pyridoxal 5'-phosphate site. Lysine 248 is a catalytic residue. Lysine 248 is subject to N6-(pyridoxal phosphate)lysine. 2 residues coordinate pyridoxal 5'-phosphate: serine 277 and threonine 278. Position 363 (threonine 363) interacts with substrate.

The protein belongs to the class-II pyridoxal-phosphate-dependent aminotransferase family. In terms of assembly, homodimer. Pyridoxal 5'-phosphate is required as a cofactor.

The enzyme catalyses succinyl-CoA + glycine + H(+) = 5-aminolevulinate + CO2 + CoA. It participates in porphyrin-containing compound metabolism; protoporphyrin-IX biosynthesis; 5-aminolevulinate from glycine: step 1/1. The chain is 5-aminolevulinate synthase 1 (hemA) from Cereibacter sphaeroides (strain ATCC 17023 / DSM 158 / JCM 6121 / CCUG 31486 / LMG 2827 / NBRC 12203 / NCIMB 8253 / ATH 2.4.1.) (Rhodobacter sphaeroides).